The following is a 463-amino-acid chain: Perilipin-5 (463 aa).

The disordered stretch occupies residues methionine 1–leucine 32. Residues methionine 1–glutamine 123 are interaction with LIPE. Positions methionine 1–leucine 188 are essential for lipid droplet targeting. Serine 17, serine 163, and serine 337 each carry phosphoserine. Over residues serine 17–glycine 26 the composition is skewed to polar residues. The interval valine 200–phenylalanine 463 is interaction with PNPLA2 and ABHD5. The interval alanine 433 to phenylalanine 463 is disordered. The interval glutamine 444–phenylalanine 463 is necessary for mitochondria recruitment at the lipid droplet surface.

Belongs to the perilipin family. Homooligomer. Interacts with PNPLA2; prevents interaction of PNPLA2 with ABHD5. Interacts with ABHD5; targets ABHD5 to lipid droplets and promotes interaction of ABHD5 with PNPLA2. Interacts with LIPE. In terms of processing, phosphorylated by PKA. Phosphorylated on serine in skeletal muscle at rest or with lipolytic stimulation. Highly expressed in oxidative tissues, including heart, liver, brown adipose tissue (BAT) and slow-twitch fibers of skeletal muscle. Lower expression in epididymal white adipose tissue and anterior tibialis and quadriceps. Expressed in adrenal glands. Isoform 2 has the highest expression in heart.

The protein resides in the lipid droplet. It localises to the cytoplasm. Its subcellular location is the mitochondrion. Its function is as follows. Lipid droplet-associated protein that maintains the balance between lipogenesis and lipolysis and also regulates fatty acid oxidation in oxidative tissues. Recruits mitochondria to the surface of lipid droplets and is involved in lipid droplet homeostasis by regulating both the storage of fatty acids in the form of triglycerides and the release of fatty acids for mitochondrial fatty acid oxidation. In lipid droplet triacylglycerol hydrolysis, plays a role as a scaffolding protein for three major key lipolytic players: ABHD5, PNPLA2 and LIPE. Reduces the triacylglycerol hydrolase activity of PNPLA2 by recruiting and sequestering PNPLA2 to lipid droplets. Phosphorylation by PKA enables lipolysis probably by promoting release of ABHD5 from the perilipin scaffold and by facilitating interaction of ABHD5 with PNPLA2. Also increases lipolysis through interaction with LIPE and upon PKA-mediated phosphorylation of LIPE. The polypeptide is Perilipin-5 (Plin5) (Mus musculus (Mouse)).